A 511-amino-acid polypeptide reads, in one-letter code: Cytochrome P450 monooxygenase nodR (511 aa).

Residues 8–28 (ILFPISWEQSPIFLAVGLIFA) traverse the membrane as a helical segment. N76 and N373 each carry an N-linked (GlcNAc...) asparagine glycan. Heme is bound at residue C452.

The protein belongs to the cytochrome P450 family. The cofactor is heme.

It is found in the membrane. The protein operates within secondary metabolite biosynthesis. In terms of biological role, cytochrome P450 monooxygenase; part of the gene cluster that mediates the biosynthesis of the indole diterpenes nodulisporic acids (NA). Nodulisporic acid A (NAA) and its chemically modified derivatives are of particular significance because of their highly potent insecticidal activity against blood-feeding arthropods and lack of observable adverse effects on mammals, in particular the tremogenicity associated with the paspaline-derived IDTs is not observed. The geranylgeranyl diphosphate (GGPP) synthase ggs1, localized outside of the cluster, is proposed to catalyze the first step in nodulisporic acid biosynthesis via conversion of farnesyl pyrophosphate and isopentyl pyrophosphate into geranylgeranyl pyrophosphate (GGPP). Condensation of indole-3-glycerol phosphate with GGPP by the prenyl transferase nodC then forms 3-geranylgeranylindole (3-GGI). Epoxidation by the FAD-dependent monooxygenase nodM leads to a single-epoxidized-GGI that is substrate of the terpene cyclase nodB for cyclization to yield emindole SB. The terminal methyl carbon, C28, of emindole SB is then oxidized by the cytochrome P450 monooxygenase nodW to produce nodulisporic acid F (NAF), the pentacyclic core of NAA. NAF is converted to nodulisporic acid E (NAE) via prenylation. This step is probably performed by one of the indole diterpene prenyltransferases nodD1 or nodD2. Several oxidation steps performed by the FAD-linked oxidoreductase nodO and one of the cytochrome P450 monooxygenase nodR, nodX or nodZ further convert NAE to nodulisporic acid D (NAD). NAD is substrate of cytochrome P450 monooxygenase nodJ to produce the precursor of nodulisporic acid C (NAC), converted to NAC by one of the indole diterpene prenyltransferases nodD1 or nodD2. The FAD-dependent monooxygenase nodY2 then oxidizes NAC to nodulisporic acid B (NAB). Finally NAB is converted to NAA by one of the cytochrome P450 monooxygenases nodR, nodX or nodZ. This chain is Cytochrome P450 monooxygenase nodR, found in Hypoxylon pulicicidum.